Consider the following 1109-residue polypeptide: Zinc finger E-box-binding homeobox 1 (1109 aa).

2 disordered regions span residues 1 to 106 (MADG…DPNV) and 123 to 143 (PEEDQRQGTPEASGHDDNGTP). Residues 15–30 (PRRNNVTNYNTVVEAN) show a composition bias toward low complexity. A phosphoserine mark is found at Ser31 and Ser33. Acidic residues predominate over residues 87–98 (VKDDECDSDAEN). The C2H2-type 1 zinc finger occupies 150 to 173 (LTCPYCDRGYKRFTSLKEHIKYRH). Glycyl lysine isopeptide (Lys-Gly) (interchain with G-Cter in SUMO2) cross-links involve residues Lys166 and Lys175. 2 consecutive C2H2-type zinc fingers follow at residues 180-202 (FSCSLCSYTFAYRTQLERHMTSH) and 220-242 (FKCTECGKAFKYKHHLKEHLRIH). The C2H2-type 4; atypical zinc-finger motif lies at 248 to 272 (YECPNCKKRFSHSGSYSSHISSKKC). The tract at residues 278–307 (VNGRPRSGLKTSQCSSPSLSTSPGSPTRPQ) is disordered. Lys287 is covalently cross-linked (Glycyl lysine isopeptide (Lys-Gly) (interchain with G-Cter in SUMO2)). A compositionally biased stretch (low complexity) spans 288–304 (TSQCSSPSLSTSPGSPT). 2 positions are modified to phosphoserine: Ser293 and Ser302. Residues Lys311 and Lys315 each participate in a glycyl lysine isopeptide (Lys-Gly) (interchain with G-Cter in SUMO2) cross-link. Lys327 is covalently cross-linked (Glycyl lysine isopeptide (Lys-Gly) (interchain with G-Cter in SUMO); alternate). Lys327 is covalently cross-linked (Glycyl lysine isopeptide (Lys-Gly) (interchain with G-Cter in SUMO2); alternate). Glycyl lysine isopeptide (Lys-Gly) (interchain with G-Cter in SUMO2) cross-links involve residues Lys419, Lys473, Lys484, Lys495, and Lys528. 3 disordered regions span residues 468–501 (VPQNLKKENPAPPKSCKSEKSPEDLTVKSEKDKS), 525–566 (PELK…SQPP), and 614–711 (QIPG…PQVE). The segment covering 483 to 501 (CKSEKSPEDLTVKSEKDKS) has biased composition (basic and acidic residues). A DNA-binding region (homeobox; atypical) is located at residues 559–618 (DLSPSQPPLKNLLSLLKAYYALNAQPSTEELTKIADSVNLPLDVVKKWFEKMQAGQIPGQ). The segment covering 654 to 665 (RGQSPLKMTSSP) has biased composition (polar residues). Ser657, Ser664, Ser671, and Ser678 each carry phosphoserine. A compositionally biased stretch (polar residues) spans 673–703 (INGSRSCTSSPSPLNLSSARNPQGYSCVSEG). Thr680 carries the phosphothreonine modification. Ser682 is subject to Phosphoserine. A Glycyl lysine isopeptide (Lys-Gly) (interchain with G-Cter in SUMO); alternate cross-link involves residue Lys752. A Glycyl lysine isopeptide (Lys-Gly) (interchain with G-Cter in SUMO2); alternate cross-link involves residue Lys752. Residues 834 to 873 (PPVKVIQPNGNQDERQDTSSEGVSVEDQNDSDCTPPKKKT) form a disordered region. 2 consecutive C2H2-type zinc fingers follow at residues 881 to 903 (YACDLCDKIFQKSSSLLRHKYEH) and 909 to 931 (HECGICRKAFKHKHHLIEHMRLH). A C2H2-type 7; atypical zinc finger spans residues 937–958 (YQCDKCGKRFSHSGSYSQHMNH). Positions 968–1109 (EDRDAMEQED…RLSEEKTNEA (142 aa)) are disordered. Residues 1012-1066 (EEDEDSEKEEEEEDKEMEELQEDKECENPQEEEEEEEEEEEEEEEEEEEEAEEAE) show a composition bias toward acidic residues. Over residues 1071-1087 (AAKTGGAVEEEAAQQAG) the composition is skewed to low complexity. Residues 1097-1109 (ESKRLSEEKTNEA) are compositionally biased toward basic and acidic residues.

Belongs to the delta-EF1/ZFH-1 C2H2-type zinc-finger family. As to quaternary structure, interacts (via N-terminus) with SMARCA4/BRG1. In terms of processing, ubiquitinated, leading to degradation in a proteasome-dependent manner. Deubiquitinated by USP51, leading to stabilization.

The protein localises to the nucleus. Its function is as follows. Acts as a transcriptional repressor. Binds to E-box sequences in the immunoglobulin heavy chain enhancer as well as in the regulatory regions of many other tissue-specific genes. Represses E-cadherin promoter and induces an epithelial-mesenchymal transition (EMT) by recruiting SMARCA4/BRG1. Represses BCL6 transcription in the presence of the corepressor CTBP1. Positively regulates neuronal differentiation. Represses RCOR1 transcription activation during neurogenesis. Represses transcription by binding to the E box (5'-CANNTG-3'). In the absence of TGFB1, acts as a repressor of COL1A2 transcription via binding to the E-box in the upstream enhancer region. The chain is Zinc finger E-box-binding homeobox 1 from Rattus norvegicus (Rat).